We begin with the raw amino-acid sequence, 424 residues long: UPF0053 protein MG146 (424 aa).

A CNNM transmembrane domain is found at 6–191 (SGLTLTVIIL…EQNGLFSKED (186 aa)). 4 consecutive transmembrane segments (helical) span residues 7–27 (GLTLTVIILSIILLAFISTVV), 71–91 (LITILITNNIVAIMVSNILFL), 101–121 (LLSSVLNLVVSGVLIVSFCEI), and 135–155 (LVLFAYLVYFFYLIFWPITKL). 2 consecutive CBS domains span residues 210 to 270 (MIKW…PKSL) and 272 to 332 (LNQL…IYDE).

Belongs to the UPF0053 family.

The protein localises to the cell membrane. The polypeptide is UPF0053 protein MG146 (Mycoplasma genitalium (strain ATCC 33530 / DSM 19775 / NCTC 10195 / G37) (Mycoplasmoides genitalium)).